The sequence spans 260 residues: Methyl-coenzyme M reductase subunit gamma (260 aa).

A coenzyme M-binding site is contributed by R123.

The protein belongs to the methyl-coenzyme M reductase gamma subunit family. As to quaternary structure, MCR is a hexamer of two alpha, two beta, and two gamma chains, forming a dimer of heterotrimers. Coenzyme F430 is required as a cofactor.

It localises to the cytoplasm. It carries out the reaction coenzyme B + methyl-coenzyme M = methane + coenzyme M-coenzyme B heterodisulfide. It participates in one-carbon metabolism; methyl-coenzyme M reduction; methane from methyl-coenzyme M: step 1/1. Component of the methyl-coenzyme M reductase (MCR) I that catalyzes the reductive cleavage of methyl-coenzyme M (CoM-S-CH3 or 2-(methylthio)ethanesulfonate) using coenzyme B (CoB or 7-mercaptoheptanoylthreonine phosphate) as reductant which results in the production of methane and the mixed heterodisulfide of CoB and CoM (CoM-S-S-CoB). This is the final step in methanogenesis. In Methanococcus vannielii, this protein is Methyl-coenzyme M reductase subunit gamma (mcrG).